The sequence spans 66 residues: Putative alpha-neurotoxin RjAa44 (66 aa).

One can recognise an LCN-type CS-alpha/beta domain in the interval lysine 1–arginine 60. 4 cysteine pairs are disulfide-bonded: cysteine 11–cysteine 59, cysteine 15–cysteine 35, cysteine 21–cysteine 42, and cysteine 25–cysteine 44.

The protein belongs to the long (4 C-C) scorpion toxin superfamily. Sodium channel inhibitor family. Alpha subfamily. As to expression, expressed by the venom gland.

The protein localises to the secreted. In terms of biological role, alpha toxins bind voltage-independently at site-3 of sodium channels (Nav) and inhibit the inactivation of the activated channels, thereby blocking neuronal transmission. In Rhopalurus junceus (Caribbean blue scorpion), this protein is Putative alpha-neurotoxin RjAa44.